A 329-amino-acid chain; its full sequence is POU domain, class 5, transcription factor 2 (329 aa).

A compositionally biased stretch (polar residues) spans 1–14 (MAGRRSSNVFPLSG). Residues 1 to 24 (MAGRRSSNVFPLSGNSGGGLEVDT) form a disordered region. In terms of domain architecture, POU-specific spans 107–181 (DVSAIQKEME…LLKMWLEEVD (75 aa)). The homeobox DNA-binding region spans 199–258 (RKRRRASRERRIGSNLEKLFLQCPEPTPQQISYIAGRLRLQKDLVQVWFSNRSQMGSWPT).

Belongs to the POU transcription factor family. Class-5 subfamily. In adult brain, expressed in the olfactory bulb, becoming specifically concentrated in the mitral cell layer. Also found in the pyramidal cell layer of the hippocampus, in the granule cell layer of the cerebellum and in the cortex.

Its subcellular location is the nucleus. Functionally, transcription factor that binds preferentially to the octamer motif (5'-ATGTTAAT-3'). May exert a regulatory function in meiotic events that are required for terminal differentiation of male germ cell. This chain is POU domain, class 5, transcription factor 2 (Pou5f2), found in Mus musculus (Mouse).